The following is a 293-amino-acid chain: Beta-porphyranase B (293 aa).

The first 21 residues, 1 to 21 (MKLSNQFLITITLLITSITFA), serve as a signal peptide directing secretion. Residues 38–291 (QEWKLIENMS…WVRSWQLVDS (254 aa)) enclose the GH16 domain. Trp67, Arg70, Glu156, Glu161, and Glu256 together coordinate substrate. Residue Glu156 is the Nucleophile of the active site. The active-site Proton donor is Glu161.

The protein belongs to the glycosyl hydrolase 16 family.

It localises to the periplasm. The enzyme catalyses Hydrolysis of beta-D-galactopyranose-(1-&gt;4)-alpha-L-galactopyranose-6-sulfate linkages in porphyran.. Functionally, cleaves the sulfated polysaccharide porphyran at the (1-&gt;4) linkages between beta-D-galactopyranose and alpha-L-galactopyranose-6-sulfate, forming mostly the disaccharide alpha-L-galactopyranose-6-sulfate-(1-&gt;3)-beta-D-galactose. Some longer oligosaccharides of even number of residues are also observed. Inactive on the non-sulfated agarose portion of the porphyran backbone. In contrast to PorA, tolerates the presence of 3-6-anhydro-L-galactose in subsite -2. In Zobellia galactanivorans (strain DSM 12802 / CCUG 47099 / CIP 106680 / NCIMB 13871 / Dsij), this protein is Beta-porphyranase B (porB).